The primary structure comprises 402 residues: MNVLVINSGSSSIKYQLIDMEREVPLCSGLVERIGEPMGKLTHKIRPDAEGEEKLTFEQPFTNHVEGMKRVVELITDADKGVIKDKSEIGAIGHRVLLGGEEIKQSVRIDDWAKGVIRDYIPLGPLHNPANLAGIEVAEELFPGLPNVGVFDTEFHQSMPAKAYLYPLPIELYEELKIRRYGFHGTSHRYITKRTAQYLGKPLDELNIITCHLGNGCSMAAVKNGKCVDTTMGITPLEGLMMGTRCGDIDPAIVPFLMEKKNLSPAEADTLMNKQSGLKGVCGMNDMRDLHAARENGNERAQLAFEMFTYRIKKYIGAYYAVLGRVDAVVFTAGIGENDDFVRAEVCAGLDSLGIAVDPARNAVRNGQPRHISPDGSRVAVLVVPTNEELEIAQATLDVLKG.

Position 7 (Asn-7) interacts with Mg(2+). An ATP-binding site is contributed by Lys-14. Arg-95 lines the substrate pocket. Asp-152 serves as the catalytic Proton donor/acceptor. ATP-binding positions include 212–216, 286–288, and 334–338; these read HLGNG, DMR, and GIGEN. Glu-388 lines the Mg(2+) pocket.

The protein belongs to the acetokinase family. As to quaternary structure, homodimer. Mg(2+) serves as cofactor. The cofactor is Mn(2+).

It localises to the cytoplasm. The enzyme catalyses acetate + ATP = acetyl phosphate + ADP. It participates in metabolic intermediate biosynthesis; acetyl-CoA biosynthesis; acetyl-CoA from acetate: step 1/2. Catalyzes the formation of acetyl phosphate from acetate and ATP. Can also catalyze the reverse reaction. The chain is Acetate kinase from Nitratidesulfovibrio vulgaris (strain DP4) (Desulfovibrio vulgaris).